Here is a 232-residue protein sequence, read N- to C-terminus: Large ribosomal subunit protein uL1 (232 aa).

Belongs to the universal ribosomal protein uL1 family. In terms of assembly, part of the 50S ribosomal subunit.

Its function is as follows. Binds directly to 23S rRNA. The L1 stalk is quite mobile in the ribosome, and is involved in E site tRNA release. Functionally, protein L1 is also a translational repressor protein, it controls the translation of the L11 operon by binding to its mRNA. The protein is Large ribosomal subunit protein uL1 of Azorhizobium caulinodans (strain ATCC 43989 / DSM 5975 / JCM 20966 / LMG 6465 / NBRC 14845 / NCIMB 13405 / ORS 571).